The chain runs to 101 residues: Small ribosomal subunit protein uS14 (101 aa).

This sequence belongs to the universal ribosomal protein uS14 family. In terms of assembly, part of the 30S ribosomal subunit. Contacts proteins S3 and S10.

In terms of biological role, binds 16S rRNA, required for the assembly of 30S particles and may also be responsible for determining the conformation of the 16S rRNA at the A site. The chain is Small ribosomal subunit protein uS14 from Bartonella bacilliformis (strain ATCC 35685 / KC583 / Herrer 020/F12,63).